Here is a 164-residue protein sequence, read N- to C-terminus: MPEQLNTRVEDCFLQAESFFKRSFKRPQVSLKLRGQKAGVAHLHENLLRFNPQLYRENSQHFLKQTVAHEVAHLIAHQLFGERIQPHGEEWQLIMRGVYELPPDRCHTYEVKRRQVTRYIYRCPCADSDFPFSSQRHGMVAQGRRYLCRRCRQTLVFTGETRVE.

One can recognise a SprT-like domain in the interval 12–157; that stretch reads CFLQAESFFK…CRRCRQTLVF (146 aa). H69 contacts Zn(2+). Residue E70 is part of the active site. Zn(2+) is bound at residue H73.

The protein belongs to the SprT family. The cofactor is Zn(2+).

The protein resides in the cytoplasm. This chain is Protein SprT, found in Pseudomonas fluorescens (strain SBW25).